A 112-amino-acid chain; its full sequence is Large ribosomal subunit protein eL33y (112 aa).

Belongs to the eukaryotic ribosomal protein eL33 family.

The polypeptide is Large ribosomal subunit protein eL33y (RPL35AC) (Arabidopsis thaliana (Mouse-ear cress)).